We begin with the raw amino-acid sequence, 264 residues long: Tryptophan synthase alpha chain (264 aa).

Active-site proton acceptor residues include Glu-45 and Asp-56.

Belongs to the TrpA family. Tetramer of two alpha and two beta chains.

It carries out the reaction (1S,2R)-1-C-(indol-3-yl)glycerol 3-phosphate + L-serine = D-glyceraldehyde 3-phosphate + L-tryptophan + H2O. The protein operates within amino-acid biosynthesis; L-tryptophan biosynthesis; L-tryptophan from chorismate: step 5/5. Its function is as follows. The alpha subunit is responsible for the aldol cleavage of indoleglycerol phosphate to indole and glyceraldehyde 3-phosphate. In Leptospira interrogans serogroup Icterohaemorrhagiae serovar copenhageni (strain Fiocruz L1-130), this protein is Tryptophan synthase alpha chain.